Here is a 349-residue protein sequence, read N- to C-terminus: tRNA uridine(34) hydroxylase (349 aa).

Positions 146-240 constitute a Rhodanese domain; the sequence is DDPDAVFIDM…YARRAREQGL (95 aa). The active-site Cysteine persulfide intermediate is the C200. Residues 316–328 are compositionally biased toward basic and acidic residues; the sequence is EEQRRRRAGRENG. The interval 316–349 is disordered; sequence EEQRRRRAGRENGNKIFNKSRGRLNTKLGIPDPE.

This sequence belongs to the TrhO family.

The catalysed reaction is uridine(34) in tRNA + AH2 + O2 = 5-hydroxyuridine(34) in tRNA + A + H2O. Catalyzes oxygen-dependent 5-hydroxyuridine (ho5U) modification at position 34 in tRNAs. This is tRNA uridine(34) hydroxylase from Enterobacter sp. (strain 638).